The following is a 422-amino-acid chain: Replication factor C large subunit (422 aa).

63-70 (GPPGIGKT) serves as a coordination point for ATP.

Belongs to the activator 1 small subunits family. RfcL subfamily. As to quaternary structure, heteromultimer composed of small subunits (RfcS) and large subunits (RfcL).

In terms of biological role, part of the RFC clamp loader complex which loads the PCNA sliding clamp onto DNA. This is Replication factor C large subunit from Pyrobaculum neutrophilum (strain DSM 2338 / JCM 9278 / NBRC 100436 / V24Sta) (Thermoproteus neutrophilus).